Reading from the N-terminus, the 474-residue chain is Tryptophan biosynthesis protein TrpCF (474 aa).

The interval 1–262 (MTSNNLPTVL…LAARELVYGP (262 aa)) is indole-3-glycerol phosphate synthase. Residues 263-474 (NKVCGLTSPS…IFATISTFHY (212 aa)) form an N-(5'-phosphoribosyl)anthranilate isomerase region.

The protein in the N-terminal section; belongs to the TrpC family. This sequence in the C-terminal section; belongs to the TrpF family. As to quaternary structure, monomer.

It carries out the reaction N-(5-phospho-beta-D-ribosyl)anthranilate = 1-(2-carboxyphenylamino)-1-deoxy-D-ribulose 5-phosphate. It catalyses the reaction 1-(2-carboxyphenylamino)-1-deoxy-D-ribulose 5-phosphate + H(+) = (1S,2R)-1-C-(indol-3-yl)glycerol 3-phosphate + CO2 + H2O. The protein operates within amino-acid biosynthesis; L-tryptophan biosynthesis; L-tryptophan from chorismate: step 3/5. It functions in the pathway amino-acid biosynthesis; L-tryptophan biosynthesis; L-tryptophan from chorismate: step 4/5. In terms of biological role, bifunctional enzyme that catalyzes two sequential steps of tryptophan biosynthetic pathway. The first reaction is catalyzed by the isomerase, coded by the TrpF domain; the second reaction is catalyzed by the synthase, coded by the TrpC domain. In Corynebacterium glutamicum (strain ATCC 13032 / DSM 20300 / JCM 1318 / BCRC 11384 / CCUG 27702 / LMG 3730 / NBRC 12168 / NCIMB 10025 / NRRL B-2784 / 534), this protein is Tryptophan biosynthesis protein TrpCF (trpC).